A 124-amino-acid chain; its full sequence is Small ribosomal subunit protein uS12 (124 aa).

Aspartate 89 bears the 3-methylthioaspartic acid mark.

The protein belongs to the universal ribosomal protein uS12 family. Part of the 30S ribosomal subunit. Contacts proteins S8 and S17. May interact with IF1 in the 30S initiation complex.

Functionally, with S4 and S5 plays an important role in translational accuracy. In terms of biological role, interacts with and stabilizes bases of the 16S rRNA that are involved in tRNA selection in the A site and with the mRNA backbone. Located at the interface of the 30S and 50S subunits, it traverses the body of the 30S subunit contacting proteins on the other side and probably holding the rRNA structure together. The combined cluster of proteins S8, S12 and S17 appears to hold together the shoulder and platform of the 30S subunit. This chain is Small ribosomal subunit protein uS12, found in Erwinia amylovora (Fire blight bacteria).